Reading from the N-terminus, the 445-residue chain is uncharacterized protein (445 aa).

This is an uncharacterized protein from Acanthamoeba polyphaga mimivirus (APMV).